The sequence spans 601 residues: Elongation factor 4 (601 aa).

A tr-type G domain is found at 2–184 (DLIRNFSIIA…EMIARVPPPT (183 aa)). Residues 14-19 (DHGKST) and 131-134 (NKID) contribute to the GTP site.

This sequence belongs to the TRAFAC class translation factor GTPase superfamily. Classic translation factor GTPase family. LepA subfamily.

The protein resides in the cell inner membrane. It catalyses the reaction GTP + H2O = GDP + phosphate + H(+). In terms of biological role, required for accurate and efficient protein synthesis under certain stress conditions. May act as a fidelity factor of the translation reaction, by catalyzing a one-codon backward translocation of tRNAs on improperly translocated ribosomes. Back-translocation proceeds from a post-translocation (POST) complex to a pre-translocation (PRE) complex, thus giving elongation factor G a second chance to translocate the tRNAs correctly. Binds to ribosomes in a GTP-dependent manner. This Polynucleobacter asymbioticus (strain DSM 18221 / CIP 109841 / QLW-P1DMWA-1) (Polynucleobacter necessarius subsp. asymbioticus) protein is Elongation factor 4.